Consider the following 237-residue polypeptide: Purine nucleoside phosphorylase DeoD-type (237 aa).

H4 contacts a purine D-ribonucleoside. Residues G20, R24, R43, and 87–90 (RVGT) contribute to the phosphate site. A purine D-ribonucleoside is bound by residues 179-181 (EME) and 203-204 (SD). D204 serves as the catalytic Proton donor.

This sequence belongs to the PNP/UDP phosphorylase family. In terms of assembly, homohexamer; trimer of homodimers.

The enzyme catalyses a purine D-ribonucleoside + phosphate = a purine nucleobase + alpha-D-ribose 1-phosphate. It catalyses the reaction a purine 2'-deoxy-D-ribonucleoside + phosphate = a purine nucleobase + 2-deoxy-alpha-D-ribose 1-phosphate. In terms of biological role, catalyzes the reversible phosphorolytic breakdown of the N-glycosidic bond in the beta-(deoxy)ribonucleoside molecules, with the formation of the corresponding free purine bases and pentose-1-phosphate. The protein is Purine nucleoside phosphorylase DeoD-type of Streptococcus pyogenes serotype M4 (strain MGAS10750).